A 168-amino-acid polypeptide reads, in one-letter code: MAFNDCFSLNYPGNPCPGDLIEVFRPGYQHWALYLGDGYVINIAPVDGIPASFTSAKSVFSSKALVKMQLLKDVVGNDTYRINNKYDETYPPLPVEEIIKRSEFVIGQEVAYNLLVNNCEHFVTLLRYGEGVSEQANRAISTVEFVTAAVGVFSFLGLFPKGQRAKYY.

The Cytoplasmic segment spans residues methionine 1–arginine 138. The LRAT domain occupies leucine 20–glutamine 135. Histidine 30 is an active-site residue. The Acyl-thioester intermediate role is filled by cysteine 119. A helical membrane pass occupies residues alanine 139–phenylalanine 159. The Lumenal segment spans residues proline 160–tyrosine 168.

The protein belongs to the H-rev107 family. In terms of tissue distribution, abundantly expressed in testis, skeletal muscle, brain, and heart. Highly expressed in the testis, skeletal muscle, brain, heart, and thyroid.

It localises to the membrane. It is found in the cytoplasm. Its subcellular location is the nucleus. The enzyme catalyses a 1,2-diacyl-sn-glycero-3-phosphocholine + H2O = a 1-acyl-sn-glycero-3-phosphocholine + a fatty acid + H(+). The catalysed reaction is a 1,2-diacyl-sn-glycero-3-phosphocholine + H2O = a 2-acyl-sn-glycero-3-phosphocholine + a fatty acid + H(+). It carries out the reaction 1,2-dihexadecanoyl-sn-glycero-3-phosphocholine + H2O = 2-hexadecanoyl-sn-glycero-3-phosphocholine + hexadecanoate + H(+). It catalyses the reaction 1,2-dihexadecanoyl-sn-glycero-3-phosphocholine + H2O = 1-hexadecanoyl-sn-glycero-3-phosphocholine + hexadecanoate + H(+). The enzyme catalyses 1-hexadecanoyl-2-(5Z,8Z,11Z,14Z-eicosatetraenoyl)-sn-glycero-3-phosphoethanolamine + H2O = 2-(5Z,8Z,11Z,14Z)-eicosatetraenoyl-sn-glycero-3-phosphoethanolamine + hexadecanoate + H(+). The catalysed reaction is 1-hexadecanoyl-2-(5Z,8Z,11Z,14Z-eicosatetraenoyl)-sn-glycero-3-phosphoethanolamine + H2O = 1-hexadecanoyl-sn-glycero-3-phosphoethanolamine + (5Z,8Z,11Z,14Z)-eicosatetraenoate + H(+). It carries out the reaction 1,2-di-(9Z-octadecenoyl)-sn-glycero-3-phosphoethanolamine + 1,2-dihexadecanoyl-sn-glycero-3-phosphocholine = hexadecanoyl-sn-glycero-3-phosphocholine + N-hexadecanoyl-1,2-di-(9Z-octadecenoyl)-sn-glycero-3-phosphoethanolamine + H(+). It catalyses the reaction 1,2-dihexadecanoyl-sn-glycero-3-phosphocholine + a 2-acyl-sn-glycero-3-phosphocholine = a 1-hexadecanoyl-2-acyl-sn-glycero-3-phosphocholine + 2-hexadecanoyl-sn-glycero-3-phosphocholine. In terms of biological role, exhibits both phospholipase A1/2 and acyltransferase activities. Shows phospholipase A1 (PLA1) and A2 (PLA2) activity, catalyzing the calcium-independent release of fatty acids from the sn-1 or sn-2 position of glycerophospholipids. Shows O-acyltransferase activity, catalyzing the transfer of a fatty acyl group from glycerophospholipid to the hydroxyl group of lysophospholipid. Shows N-acyltransferase activity, catalyzing the calcium-independent transfer of a fatty acyl group at the sn-1 position of phosphatidylcholine (PC) and other glycerophospholipids to the primary amine of phosphatidylethanolamine (PE), forming N-acylphosphatidylethanolamine (NAPE) which serves as precursor for N-acylethanolamines (NAEs). The sequence is that of Phospholipase A and acyltransferase 1 from Homo sapiens (Human).